We begin with the raw amino-acid sequence, 554 residues long: Probable efflux pump gsfJ (554 aa).

14 consecutive transmembrane segments (helical) span residues 54–74, 93–115, 120–140, 152–172, 181–201, 206–226, 248–268, 279–299, 321–341, 349–369, 379–399, 410–430, 447–467, and 518–538; these read LAAV…DNTI, SWYG…GKFY, IKVW…ICAV, AIAG…IGFA, LLGF…LIGG, KCFY…FLLF, LVGA…LQYG, VIGL…WEIY, IYMF…PIYF, PIGS…AAIV, IVPL…GLFY, WVGY…IAMS, IVNF…QCAF, and VFAI…FGSW.

It belongs to the major facilitator superfamily.

Its subcellular location is the membrane. Its function is as follows. Probable efflux pump; part of the gene cluster that mediates the biosynthesis of griseofulvin. The sequence is that of Probable efflux pump gsfJ from Penicillium aethiopicum.